An 809-amino-acid polypeptide reads, in one-letter code: 3',5'-cyclic-AMP phosphodiesterase 4D (809 aa).

A disordered region spans residues Met1 to Arg107. A phosphoserine mark is found at His54, Pro59, and Pro63. Residues Pro58–Gly89 show a composition bias toward pro residues. Positions Ala90–Gly102 are enriched in low complexity. Phosphoserine occurs at positions 142, 299, 301, 348, and 375. The segment at Glu343–Ile364 is disordered. Residues Val386–Ser715 enclose the PDEase domain. A Glycyl lysine isopeptide (Lys-Gly) (interchain with G-Cter in SUMO) cross-link involves residue Lys387. The active-site Proton donor is the His462. His462 contributes to the 3',5'-cyclic AMP binding site. An AMP-binding site is contributed by His462. Zn(2+)-binding residues include His466, His502, Asp503, and Asp620. The AMP site is built by Asp503, Asp620, Asn623, Gln671, and Phe674. Asp503 serves as a coordination point for Mg(2+). A Mn(2+)-binding site is contributed by Asp503. 2 residues coordinate 3',5'-cyclic AMP: Gln671 and Phe674. Disordered regions lie at residues Ser710–Gly729 and Thr739–Thr809. A compositionally biased stretch (polar residues) spans Cys762–Ser773. Residues Pro779–Gln796 are compositionally biased toward acidic residues.

It belongs to the cyclic nucleotide phosphodiesterase family. PDE4 subfamily. In terms of assembly, homodimer for the long isoforms. Isoforms with truncated N-termini are monomeric. Isoform 3 is part of a ternary complex containing PRKAR2A, PRKAR2B and AKAP9. Interacts with PDE4DIP. Identified in a complex composed of RYR1, PDE4D, PKA, FKBP1A and protein phosphatase 1 (PP1). Isoform 5, isoform N3 and isoform 12 bind RACK1 via their unique N-terminus. Binds ARRB2. Interacts (via N-terminal region) with SHANK2 (via proline-rich region); the interaction is increased in a PKA-dependent manner. The cofactor is Zn(2+). Requires Mg(2+) as cofactor. Mn(2+) is required as a cofactor. Post-translationally, long isoforms that share a conserved PKA phosphorylation site in the N-terminus are activated by PKA through phosphorylation. Isoform 3 and isoform 7 are activated by phosphorylation (in vitro), but not isoform 6. Isoform N3 and isoform 12 are phosphorylated on Ser-49, Ser-51, Ser-55 and Ser-59. In terms of processing, sumoylation of long isoforms by PIAS4 augments their activation by PKA phosphorylation and represses their inhibition by ERK phosphorylation. Expressed in colonic epithelial cells (at protein level). Widespread; most abundant in skeletal muscle. As to expression, detected in brain. In terms of tissue distribution, detected in brain, placenta, lung and kidney. Detected in heart and skeletal muscle.

Its subcellular location is the apical cell membrane. It is found in the cytoplasm. It localises to the membrane. The protein localises to the cytoskeleton. The protein resides in the microtubule organizing center. Its subcellular location is the centrosome. The catalysed reaction is 3',5'-cyclic AMP + H2O = AMP + H(+). Its pathway is purine metabolism; 3',5'-cyclic AMP degradation; AMP from 3',5'-cyclic AMP: step 1/1. Its activity is regulated as follows. Inhibited by rolipram. Activated by phosphatidic acid. Its function is as follows. Hydrolyzes the second messenger cAMP, which is a key regulator of many important physiological processes. This chain is 3',5'-cyclic-AMP phosphodiesterase 4D, found in Homo sapiens (Human).